Here is a 206-residue protein sequence, read N- to C-terminus: Small ribosomal subunit protein uS3 (206 aa).

Positions 39-107 (IRSYINESFK…SVEVNVVGIK (69 aa)) constitute a KH type-2 domain.

It belongs to the universal ribosomal protein uS3 family. As to quaternary structure, part of the 30S ribosomal subunit. Forms a tight complex with proteins S10 and S14.

Its function is as follows. Binds the lower part of the 30S subunit head. Binds mRNA in the 70S ribosome, positioning it for translation. This is Small ribosomal subunit protein uS3 from Wolbachia sp. subsp. Brugia malayi (strain TRS).